A 313-amino-acid chain; its full sequence is Carbamate kinase (313 aa).

The protein belongs to the carbamate kinase family.

The protein resides in the cytoplasm. The enzyme catalyses hydrogencarbonate + NH4(+) + ATP = carbamoyl phosphate + ADP + H2O + H(+). It functions in the pathway metabolic intermediate metabolism; carbamoyl phosphate degradation; CO(2) and NH(3) from carbamoyl phosphate: step 1/1. The chain is Carbamate kinase (arcC) from Oenococcus oeni (Leuconostoc oenos).